The chain runs to 304 residues: UDP-3-O-acyl-N-acetylglucosamine deacetylase (304 aa).

Positions 78, 235, and 239 each coordinate Zn(2+). Residue histidine 262 is the Proton donor of the active site.

This sequence belongs to the LpxC family. The cofactor is Zn(2+).

The catalysed reaction is a UDP-3-O-[(3R)-3-hydroxyacyl]-N-acetyl-alpha-D-glucosamine + H2O = a UDP-3-O-[(3R)-3-hydroxyacyl]-alpha-D-glucosamine + acetate. It participates in glycolipid biosynthesis; lipid IV(A) biosynthesis; lipid IV(A) from (3R)-3-hydroxytetradecanoyl-[acyl-carrier-protein] and UDP-N-acetyl-alpha-D-glucosamine: step 2/6. Functionally, catalyzes the hydrolysis of UDP-3-O-myristoyl-N-acetylglucosamine to form UDP-3-O-myristoylglucosamine and acetate, the committed step in lipid A biosynthesis. This Anaeromyxobacter sp. (strain Fw109-5) protein is UDP-3-O-acyl-N-acetylglucosamine deacetylase.